A 422-amino-acid polypeptide reads, in one-letter code: Nuclear hormone receptor family member nhr-54 (422 aa).

Residues 14-92 (SVKCAICYKA…LGMTTENVRT (79 aa)) constitute a DNA-binding region (nuclear receptor). 2 consecutive NR C4-type zinc fingers follow at residues 17–37 (CAIC…CRAC) and 53–80 (CTRK…FKKC). The NR LBD domain maps to 161-422 (PDDDVIVELN…VFTEPEFFRV (262 aa)).

It belongs to the nuclear hormone receptor family.

The protein localises to the nucleus. In terms of biological role, orphan nuclear receptor. The polypeptide is Nuclear hormone receptor family member nhr-54 (nhr-54) (Caenorhabditis elegans).